A 699-amino-acid chain; its full sequence is DNA ligase (699 aa).

NAD(+)-binding positions include 47–51, 96–97, and E128; these read DAQYD and SL. The active-site N6-AMP-lysine intermediate is K130. Positions 151, 186, 303, and 327 each coordinate NAD(+). Positions 422, 425, 440, and 446 each coordinate Zn(2+). The BRCT domain maps to 620-699; that stretch reads GDNLLLSNQT…EEWIKMVNEL (80 aa).

The protein belongs to the NAD-dependent DNA ligase family. LigA subfamily. The cofactor is Mg(2+). Mn(2+) is required as a cofactor.

The enzyme catalyses NAD(+) + (deoxyribonucleotide)n-3'-hydroxyl + 5'-phospho-(deoxyribonucleotide)m = (deoxyribonucleotide)n+m + AMP + beta-nicotinamide D-nucleotide.. DNA ligase that catalyzes the formation of phosphodiester linkages between 5'-phosphoryl and 3'-hydroxyl groups in double-stranded DNA using NAD as a coenzyme and as the energy source for the reaction. It is essential for DNA replication and repair of damaged DNA. The chain is DNA ligase from Orientia tsutsugamushi (strain Ikeda) (Rickettsia tsutsugamushi).